A 95-amino-acid polypeptide reads, in one-letter code: Aspartyl/glutamyl-tRNA(Asn/Gln) amidotransferase subunit C (95 aa).

It belongs to the GatC family. Heterotrimer of A, B and C subunits.

The catalysed reaction is L-glutamyl-tRNA(Gln) + L-glutamine + ATP + H2O = L-glutaminyl-tRNA(Gln) + L-glutamate + ADP + phosphate + H(+). It carries out the reaction L-aspartyl-tRNA(Asn) + L-glutamine + ATP + H2O = L-asparaginyl-tRNA(Asn) + L-glutamate + ADP + phosphate + 2 H(+). Allows the formation of correctly charged Asn-tRNA(Asn) or Gln-tRNA(Gln) through the transamidation of misacylated Asp-tRNA(Asn) or Glu-tRNA(Gln) in organisms which lack either or both of asparaginyl-tRNA or glutaminyl-tRNA synthetases. The reaction takes place in the presence of glutamine and ATP through an activated phospho-Asp-tRNA(Asn) or phospho-Glu-tRNA(Gln). The sequence is that of Aspartyl/glutamyl-tRNA(Asn/Gln) amidotransferase subunit C from Rhodopseudomonas palustris (strain TIE-1).